Here is a 227-residue protein sequence, read N- to C-terminus: MLLHIPNVLSPEEVRYFRDRLEDAEWTDGRVTAGEQSAKAKLNLQIPQDSAECRELGEFVLRALGRNPTFNSAALPLRVYPPLFNRYDTGMHFDAHVDNAIRPIPGAGMRIRTDVSSTLFLTGPDEYDGGELVIQDTYGTQSVKLPAGDMVLYPSTSLHSVNRITRGSRWASFFWSQSMVRDDTKRRLLYEFDCSIIETRKALPDSHPAVLGLTSTYHNLLRQWAEL.

Residues 78 to 178 (RVYPPLFNRY…RWASFFWSQS (101 aa)) form the Fe2OG dioxygenase domain. Histidine 96, aspartate 98, and histidine 159 together coordinate Fe cation. Arginine 169 provides a ligand contact to 2-oxoglutarate.

Fe(2+) is required as a cofactor. It depends on L-ascorbate as a cofactor.

The chain is PKHD-type hydroxylase GOX0559 from Gluconobacter oxydans (strain 621H) (Gluconobacter suboxydans).